The following is a 186-amino-acid chain: NADH-quinone oxidoreductase subunit B (186 aa).

Positions 44, 45, 110, and 139 each coordinate [4Fe-4S] cluster.

It belongs to the complex I 20 kDa subunit family. As to quaternary structure, NDH-1 is composed of 14 different subunits. Subunits NuoB, C, D, E, F, and G constitute the peripheral sector of the complex. The cofactor is [4Fe-4S] cluster.

The protein resides in the cell inner membrane. It carries out the reaction a quinone + NADH + 5 H(+)(in) = a quinol + NAD(+) + 4 H(+)(out). NDH-1 shuttles electrons from NADH, via FMN and iron-sulfur (Fe-S) centers, to quinones in the respiratory chain. The immediate electron acceptor for the enzyme in this species is believed to be ubiquinone. Couples the redox reaction to proton translocation (for every two electrons transferred, four hydrogen ions are translocated across the cytoplasmic membrane), and thus conserves the redox energy in a proton gradient. The protein is NADH-quinone oxidoreductase subunit B of Leptospira borgpetersenii serovar Hardjo-bovis (strain JB197).